The sequence spans 345 residues: S-adenosylmethionine:tRNA ribosyltransferase-isomerase (345 aa).

The protein belongs to the QueA family. As to quaternary structure, monomer.

Its subcellular location is the cytoplasm. The enzyme catalyses 7-aminomethyl-7-carbaguanosine(34) in tRNA + S-adenosyl-L-methionine = epoxyqueuosine(34) in tRNA + adenine + L-methionine + 2 H(+). It participates in tRNA modification; tRNA-queuosine biosynthesis. In terms of biological role, transfers and isomerizes the ribose moiety from AdoMet to the 7-aminomethyl group of 7-deazaguanine (preQ1-tRNA) to give epoxyqueuosine (oQ-tRNA). The polypeptide is S-adenosylmethionine:tRNA ribosyltransferase-isomerase (Helicobacter pylori (strain J99 / ATCC 700824) (Campylobacter pylori J99)).